Consider the following 438-residue polypeptide: Enolase (438 aa).

Positions 159 and 168 each coordinate substrate. E211 serves as the catalytic Proton donor. Mg(2+) contacts are provided by D246, E297, and D322. Residues E297 and D322 each contribute to the substrate site. The Proton acceptor role is filled by K347. Residues 374 to 377 and K398 each bind substrate; that span reads SHRS.

The protein belongs to the enolase family. Homodimer. Mg(2+) serves as cofactor.

The protein resides in the cytoplasm. It carries out the reaction (2R)-2-phosphoglycerate = phosphoenolpyruvate + H2O. It participates in carbohydrate degradation; glycolysis; pyruvate from D-glyceraldehyde 3-phosphate: step 4/5. This chain is Enolase (emp-7), found in Neurospora crassa (strain ATCC 24698 / 74-OR23-1A / CBS 708.71 / DSM 1257 / FGSC 987).